The primary structure comprises 505 residues: One cut domain family member 2 (505 aa).

Disordered regions lie at residues 29 to 94 (LGTL…GTAA), 165 to 190 (KFHH…RLSG), and 275 to 333 (EQHL…QLEE). Residues 35-56 (PVGGGSGGGGGGGGGGGGGGPG) show a composition bias toward gly residues. Over residues 167–187 (HHPHPHHHPHHHHHHHHHHQR) the composition is skewed to basic residues. Residues 325-411 (VATSGQLEEI…QRMSALRLAA (87 aa)) constitute a DNA-binding region (CUT). Positions 427 to 486 (QKKSRLVFTDLQRRTLFAIFKENKRPSKEMQITISQQLGLELTTVSNFFMNARRRSLEKW) form a DNA-binding region, homeobox.

The protein belongs to the CUT homeobox family.

The protein resides in the nucleus. Transcriptional activator. Activates the transcription of a number of liver genes such as HNF3B. The chain is One cut domain family member 2 (Onecut2) from Mus musculus (Mouse).